The chain runs to 541 residues: Membrane protein insertase YidC (541 aa).

A run of 6 helical transmembrane segments spans residues 6–26 (NILL…WQAD), 325–345 (LVVD…LLMF), 349–369 (FVGN…GLLF), 420–440 (GGCL…WVLL), 457–477 (LSVQ…MFVM), and 500–520 (VIFT…WLVG).

Belongs to the OXA1/ALB3/YidC family. Type 1 subfamily. Interacts with the Sec translocase complex via SecD. Specifically interacts with transmembrane segments of nascent integral membrane proteins during membrane integration.

It localises to the cell inner membrane. In terms of biological role, required for the insertion and/or proper folding and/or complex formation of integral membrane proteins into the membrane. Involved in integration of membrane proteins that insert both dependently and independently of the Sec translocase complex, as well as at least some lipoproteins. Aids folding of multispanning membrane proteins. This chain is Membrane protein insertase YidC, found in Shewanella baltica (strain OS223).